Reading from the N-terminus, the 141-residue chain is Protein KRTCAP2 homolog (141 aa).

4 consecutive transmembrane segments (helical) span residues 11–31 (VVSS…LRFC), 42–62 (VLLG…CVSN), 74–94 (AKLL…AGLV), and 97–117 (VCAT…NRIS).

This sequence belongs to the KRTCAP2 family. In terms of assembly, component of the oligosaccharyltransferase (OST) complex.

Its subcellular location is the membrane. Its function is as follows. Subunit of the oligosaccharyl transferase (OST) complex that catalyzes the initial transfer of a defined glycan (Glc(3)Man(9)GlcNAc(2) in eukaryotes) from the lipid carrier dolichol-pyrophosphate to an asparagine residue within an Asn-X-Ser/Thr consensus motif in nascent polypeptide chains, the first step in protein N-glycosylation. N-glycosylation occurs cotranslationally and the complex associates with the Sec61 complex at the channel-forming translocon complex that mediates protein translocation across the endoplasmic reticulum (ER). All subunits are required for a maximal enzyme activity. This chain is Protein KRTCAP2 homolog, found in Drosophila melanogaster (Fruit fly).